Reading from the N-terminus, the 471-residue chain is Alpha-1,3/1,6-mannosyltransferase alg-2 (471 aa).

Residues Asn178 and Asn279 are each glycosylated (N-linked (GlcNAc...) asparagine). A helical transmembrane segment spans residues 446–466; it reads GMILLVVGAAVAAVAGVISAV.

The protein belongs to the glycosyltransferase group 1 family. Glycosyltransferase 4 subfamily.

Its subcellular location is the endoplasmic reticulum membrane. The enzyme catalyses a beta-D-Man-(1-&gt;4)-beta-D-GlcNAc-(1-&gt;4)-alpha-D-GlcNAc-diphospho-di-trans,poly-cis-dolichol + GDP-alpha-D-mannose = an alpha-D-Man-(1-&gt;3)-beta-D-Man-(1-&gt;4)-beta-D-GlcNAc-(1-&gt;4)-alpha-D-GlcNAc-diphospho-di-trans,poly-cis-dolichol + GDP + H(+). The catalysed reaction is an alpha-D-Man-(1-&gt;3)-beta-D-Man-(1-&gt;4)-beta-D-GlcNAc-(1-&gt;4)-alpha-D-GlcNAc-diphospho-di-trans,poly-cis-dolichol + GDP-alpha-D-mannose = an alpha-D-Man-(1-&gt;3)-[alpha-D-Man-(1-&gt;6)]-beta-D-Man-(1-&gt;4)-beta-D-GlcNAc-(1-&gt;4)-alpha-D-GlcNAc-diphospho-di-trans,poly-cis-dolichol + GDP + H(+). Its pathway is protein modification; protein glycosylation. Its function is as follows. Mannosylates Man(2)GlcNAc(2)-dolichol diphosphate and Man(1)GlcNAc(2)-dolichol diphosphate to form Man(3)GlcNAc(2)-dolichol diphosphate. This Neurospora crassa (strain ATCC 24698 / 74-OR23-1A / CBS 708.71 / DSM 1257 / FGSC 987) protein is Alpha-1,3/1,6-mannosyltransferase alg-2 (alg-2).